The primary structure comprises 573 residues: Proline--tRNA ligase (573 aa).

The protein belongs to the class-II aminoacyl-tRNA synthetase family. ProS type 1 subfamily. Homodimer.

It localises to the cytoplasm. It catalyses the reaction tRNA(Pro) + L-proline + ATP = L-prolyl-tRNA(Pro) + AMP + diphosphate. Functionally, catalyzes the attachment of proline to tRNA(Pro) in a two-step reaction: proline is first activated by ATP to form Pro-AMP and then transferred to the acceptor end of tRNA(Pro). As ProRS can inadvertently accommodate and process non-cognate amino acids such as alanine and cysteine, to avoid such errors it has two additional distinct editing activities against alanine. One activity is designated as 'pretransfer' editing and involves the tRNA(Pro)-independent hydrolysis of activated Ala-AMP. The other activity is designated 'posttransfer' editing and involves deacylation of mischarged Ala-tRNA(Pro). The misacylated Cys-tRNA(Pro) is not edited by ProRS. The chain is Proline--tRNA ligase from Geobacter sp. (strain M21).